A 208-amino-acid chain; its full sequence is MGNELQLENKILKGTTTVGIRVNDGVILAADRRASAGFFVANKMVRKVLYITDKIGITTAGSVADLQFIYDVLKNIYHYNSITKYGPISIKGIATRLANVLSATKYFPYIVQILIGGYDDQPRLFNLDYLGDITEENYVATGSGSPVAMGVLEDEYNPKMTLDEAADLAKRAVFSAIKRDSFTGTGVIVAKIHSKGHEELEFYLNKKM.

The propeptide at 1 to 14 (MGNELQLENKILKG) is removed in mature form; by autocatalysis. The active-site Nucleophile is threonine 15.

It belongs to the peptidase T1B family. The 20S proteasome core is composed of 14 alpha and 14 beta subunits that assemble into four stacked heptameric rings, resulting in a barrel-shaped structure. The two inner rings, each composed of seven catalytic beta subunits, are sandwiched by two outer rings, each composed of seven alpha subunits. The catalytic chamber with the active sites is on the inside of the barrel. Has a gated structure, the ends of the cylinder being occluded by the N-termini of the alpha-subunits. Is capped at one or both ends by the proteasome regulatory ATPase, PAN.

The protein resides in the cytoplasm. It carries out the reaction Cleavage of peptide bonds with very broad specificity.. With respect to regulation, the formation of the proteasomal ATPase PAN-20S proteasome complex, via the docking of the C-termini of PAN into the intersubunit pockets in the alpha-rings, triggers opening of the gate for substrate entry. Interconversion between the open-gate and close-gate conformations leads to a dynamic regulation of the 20S proteasome proteolysis activity. Component of the proteasome core, a large protease complex with broad specificity involved in protein degradation. This is Proteasome subunit beta 2 from Saccharolobus solfataricus (strain ATCC 35092 / DSM 1617 / JCM 11322 / P2) (Sulfolobus solfataricus).